Consider the following 322-residue polypeptide: uncharacterized protein (322 aa).

5 consecutive transmembrane segments (helical) span residues 159-179 (GIIF…MLYL), 203-223 (MNIP…YIWL), 234-254 (GGIL…RVGL), 267-287 (FEGS…LIPY), and 296-316 (TLLS…FFAW).

It is found in the membrane. This is an uncharacterized protein from Dictyostelium discoideum (Social amoeba).